The sequence spans 221 residues: Thiamine-phosphate synthase (221 aa).

4-amino-2-methyl-5-(diphosphooxymethyl)pyrimidine is bound by residues 39 to 43 (QLRCK) and Asn76. Mg(2+)-binding residues include Asp77 and Asp96. Residue Ser114 participates in 4-amino-2-methyl-5-(diphosphooxymethyl)pyrimidine binding. Residue 140–142 (TPT) participates in 2-[(2R,5Z)-2-carboxy-4-methylthiazol-5(2H)-ylidene]ethyl phosphate binding. Lys143 lines the 4-amino-2-methyl-5-(diphosphooxymethyl)pyrimidine pocket. Gly171 serves as a coordination point for 2-[(2R,5Z)-2-carboxy-4-methylthiazol-5(2H)-ylidene]ethyl phosphate.

It belongs to the thiamine-phosphate synthase family. Mg(2+) is required as a cofactor.

It catalyses the reaction 2-[(2R,5Z)-2-carboxy-4-methylthiazol-5(2H)-ylidene]ethyl phosphate + 4-amino-2-methyl-5-(diphosphooxymethyl)pyrimidine + 2 H(+) = thiamine phosphate + CO2 + diphosphate. The enzyme catalyses 2-(2-carboxy-4-methylthiazol-5-yl)ethyl phosphate + 4-amino-2-methyl-5-(diphosphooxymethyl)pyrimidine + 2 H(+) = thiamine phosphate + CO2 + diphosphate. It carries out the reaction 4-methyl-5-(2-phosphooxyethyl)-thiazole + 4-amino-2-methyl-5-(diphosphooxymethyl)pyrimidine + H(+) = thiamine phosphate + diphosphate. It functions in the pathway cofactor biosynthesis; thiamine diphosphate biosynthesis; thiamine phosphate from 4-amino-2-methyl-5-diphosphomethylpyrimidine and 4-methyl-5-(2-phosphoethyl)-thiazole: step 1/1. Functionally, condenses 4-methyl-5-(beta-hydroxyethyl)thiazole monophosphate (THZ-P) and 2-methyl-4-amino-5-hydroxymethyl pyrimidine pyrophosphate (HMP-PP) to form thiamine monophosphate (TMP). This chain is Thiamine-phosphate synthase, found in Deinococcus geothermalis (strain DSM 11300 / CIP 105573 / AG-3a).